Consider the following 244-residue polypeptide: Krueppel-like factor 9 (244 aa).

Residues 80 to 142 are disordered; that stretch reads SVCSDSLESP…AKGKHASEKR (63 aa). Serine 122 bears the Phosphoserine mark. C2H2-type zinc fingers lie at residues 143 to 167, 173 to 197, and 203 to 225; these read HKCP…YRVH, FPCT…YRTH, and FRCP…ARRH.

This sequence belongs to the Sp1 C2H2-type zinc-finger protein family. As to quaternary structure, interacts with ZZEF1. In terms of tissue distribution, epidermis (at protein level).

It is found in the nucleus. Its function is as follows. Transcription factor that binds to GC box promoter elements. Selectively activates mRNA synthesis from genes containing tandem repeats of GC boxes but represses genes with a single GC box. Acts as an epidermal circadian transcription factor regulating keratinocyte proliferation. This Homo sapiens (Human) protein is Krueppel-like factor 9 (KLF9).